A 292-amino-acid chain; its full sequence is 4-hydroxy-tetrahydrodipicolinate synthase (292 aa).

Position 45 (threonine 45) interacts with pyruvate. The active-site Proton donor/acceptor is the tyrosine 133. The Schiff-base intermediate with substrate role is filled by lysine 161. Isoleucine 203 is a pyruvate binding site.

This sequence belongs to the DapA family. As to quaternary structure, homotetramer; dimer of dimers.

The protein resides in the cytoplasm. The enzyme catalyses L-aspartate 4-semialdehyde + pyruvate = (2S,4S)-4-hydroxy-2,3,4,5-tetrahydrodipicolinate + H2O + H(+). It participates in amino-acid biosynthesis; L-lysine biosynthesis via DAP pathway; (S)-tetrahydrodipicolinate from L-aspartate: step 3/4. Its function is as follows. Catalyzes the condensation of (S)-aspartate-beta-semialdehyde [(S)-ASA] and pyruvate to 4-hydroxy-tetrahydrodipicolinate (HTPA). The polypeptide is 4-hydroxy-tetrahydrodipicolinate synthase (Escherichia fergusonii (strain ATCC 35469 / DSM 13698 / CCUG 18766 / IAM 14443 / JCM 21226 / LMG 7866 / NBRC 102419 / NCTC 12128 / CDC 0568-73)).